The primary structure comprises 24 residues: Humanin-like 3 (24 aa).

This sequence belongs to the humanin family. Highly expressed in testis. Also expressed in kidney, heart, skeletal muscles and brain.

The protein localises to the secreted. It is found in the cytoplasm. In terms of biological role, plays a role as a neuroprotective and antiapoptotic factor. The polypeptide is Humanin-like 3 (Homo sapiens (Human)).